Here is a 548-residue protein sequence, read N- to C-terminus: Cleavage and polyadenylation specificity factor subunit 6 (548 aa).

Residues 81 to 161 (IALYIGNLTW…QKPIVTPCNK (81 aa)) form the RRM domain. Polar residues predominate over residues 169-180 (MQSRKTATQAGQ). 2 disordered regions span residues 169–401 (MQSR…MDVV) and 473–548 (LHGI…YRHR). 3 stretches are compositionally biased toward pro residues: residues 221-279 (PAGP…PPVM), 294-362 (PPGP…PPPG), and 373-384 (GPPPSDPYGRPP). Basic and acidic residues-rich tracts occupy residues 385–400 (PYER…DMDV) and 490–500 (RSRERDHSRSR). Basic residues predominate over residues 501-511 (EKSRRHKSRSR). The segment covering 512-548 (DRHDDYYRERSRERERHRDRERDRDRERDREREYRHR) has biased composition (basic and acidic residues).

Belongs to the RRM CPSF6/7 family. In terms of assembly, component of the cleavage factor Im (CFIm) complex.

The protein resides in the nucleus. It is found in the nucleoplasm. Its subcellular location is the nucleus speckle. It localises to the cytoplasm. Its function is as follows. Component of the cleavage factor Im (CFIm) complex that functions as an activator of the pre-mRNA 3'-end cleavage and polyadenylation processing required for the maturation of pre-mRNA into functional mRNAs. CFIm contributes to the recruitment of multiprotein complexes on specific sequences on the pre-mRNA 3'-end, so called cleavage and polyadenylation signals (pA signals). Most pre-mRNAs contain multiple pA signals, resulting in alternative cleavage and polyadenylation (APA) producing mRNAs with variable 3'-end formation. The CFIm complex acts as a key regulator of cleavage and polyadenylation site choice during APA through its binding to 5'-UGUA-3' elements localized in the 3'-untranslated region (UTR) for a huge number of pre-mRNAs. Plays a role in mRNA export. The sequence is that of Cleavage and polyadenylation specificity factor subunit 6 from Xenopus laevis (African clawed frog).